A 617-amino-acid polypeptide reads, in one-letter code: DNA mismatch repair protein MutL (617 aa).

It belongs to the DNA mismatch repair MutL/HexB family.

Its function is as follows. This protein is involved in the repair of mismatches in DNA. It is required for dam-dependent methyl-directed DNA mismatch repair. May act as a 'molecular matchmaker', a protein that promotes the formation of a stable complex between two or more DNA-binding proteins in an ATP-dependent manner without itself being part of a final effector complex. The sequence is that of DNA mismatch repair protein MutL from Christiangramia forsetii (strain DSM 17595 / CGMCC 1.15422 / KT0803) (Gramella forsetii).